We begin with the raw amino-acid sequence, 157 residues long: Protein Smg homolog (157 aa).

This sequence belongs to the Smg family.

This is Protein Smg homolog from Aeromonas salmonicida (strain A449).